A 143-amino-acid polypeptide reads, in one-letter code: MYTCAKFVSTPSLIRRTSTVLSRSLSAVVVRRPETLTDESHSSLAVVPRPLTTSLTPSRSFQTSAISRDIDTAAKFIGAGAATVGVAGSGAGIGTVFGSLIIGYARNPSLKQQLFSYAILGFALSEAMGLFCLMVAFLILFAM.

The transit peptide at 1 to 68 (MYTCAKFVST…RSFQTSAISR (68 aa)) directs the protein to the mitochondrion. The helical transmembrane segment at 84-104 (VGVAGSGAGIGTVFGSLIIGY) threads the bilayer. Lys111 is modified (N6,N6,N6-trimethyllysine). A helical transmembrane segment spans residues 119–139 (ILGFALSEAMGLFCLMVAFLI).

Belongs to the ATPase C chain family. In terms of assembly, F-type ATPases have 2 components, CF(1) - the catalytic core - and CF(0) - the membrane proton channel. CF(1) has five subunits: alpha(3), beta(3), gamma(1), delta(1), epsilon(1). CF(0) has three main subunits: a, b and c. Interacts with DNAJC30; interaction is direct. Post-translationally, trimethylated by ATPSCKMT at Lys-111. Methylation is required for proper incorporation of the C subunit into the ATP synthase complex and mitochondrial respiration.

It localises to the mitochondrion membrane. In terms of biological role, mitochondrial membrane ATP synthase (F(1)F(0) ATP synthase or Complex V) produces ATP from ADP in the presence of a proton gradient across the membrane which is generated by electron transport complexes of the respiratory chain. F-type ATPases consist of two structural domains, F(1) - containing the extramembraneous catalytic core and F(0) - containing the membrane proton channel, linked together by a central stalk and a peripheral stalk. During catalysis, ATP synthesis in the catalytic domain of F(1) is coupled via a rotary mechanism of the central stalk subunits to proton translocation. Part of the complex F(0) domain. A homomeric c-ring of probably 10 subunits is part of the complex rotary element. The chain is ATP synthase F(0) complex subunit C2, mitochondrial from Bos taurus (Bovine).